A 222-amino-acid chain; its full sequence is Cytidylate kinase (222 aa).

Residue 10–18 (GPAGSGKSS) participates in ATP binding.

Belongs to the cytidylate kinase family. Type 1 subfamily.

Its subcellular location is the cytoplasm. It catalyses the reaction CMP + ATP = CDP + ADP. The catalysed reaction is dCMP + ATP = dCDP + ADP. The polypeptide is Cytidylate kinase (Acholeplasma laidlawii (strain PG-8A)).